Reading from the N-terminus, the 1345-residue chain is DNA-directed RNA polymerase subunit beta (1345 aa).

Belongs to the RNA polymerase beta chain family. The RNAP catalytic core consists of 2 alpha, 1 beta, 1 beta' and 1 omega subunit. When a sigma factor is associated with the core the holoenzyme is formed, which can initiate transcription.

The catalysed reaction is RNA(n) + a ribonucleoside 5'-triphosphate = RNA(n+1) + diphosphate. In terms of biological role, DNA-dependent RNA polymerase catalyzes the transcription of DNA into RNA using the four ribonucleoside triphosphates as substrates. This is DNA-directed RNA polymerase subunit beta from Shewanella sp. (strain MR-4).